The sequence spans 184 residues: Probable type 3 secretion system regulator AscH (184 aa).

The tract at residues 1–25 (MKIEGSDQLGGEQPQRQPLPPESMA) is disordered.

It belongs to the YopR family.

It localises to the secreted. May be involved in the regulation of the assembly of the type III secretion system (T3SS), also called injectisome, which is used to inject bacterial effector proteins into eukaryotic host cells. May control the polymerization of the needle. The protein is Probable type 3 secretion system regulator AscH of Aeromonas salmonicida subsp. salmonicida.